The sequence spans 376 residues: N6-methyladenosine RNA methyltransferase MTA1 (376 aa).

Positions threonine 53 to leucine 78 are disordered.

Belongs to the MT-A70-like family.

It carries out the reaction an adenosine in mRNA + S-adenosyl-L-methionine = an N(6)-methyladenosine in mRNA + S-adenosyl-L-homocysteine + H(+). Its function is as follows. N6-methyladenosine RNA methyltransferase that plays a crucial role in fungal phenotypic traits, virulence, and stress tolerance. Mediates the methylation of mRNAs to produce N6-methyladenosine (m6A)-containing mRNAs. M6A is a modification present at internal sites of mRNAs and some non-coding RNAs and plays a role in mRNA stability and processing. Required for appressorium turgor pressure and regulates autophagosome formation during appressorium formation stage. Specifically, mediates the stability of ATG8 mRNA in a m6A-dependent manner via modification of the m6A site A982 located in 3'UTR region. The polypeptide is N6-methyladenosine RNA methyltransferase MTA1 (Pyricularia oryzae (strain 70-15 / ATCC MYA-4617 / FGSC 8958) (Rice blast fungus)).